The following is a 317-amino-acid chain: Zinc transporter ZIP3 (317 aa).

Topologically, residues 1–3 (MTK) are extracellular. The chain crosses the membrane as a helical span at residues 4-24 (LLVAKVLCMVGVFFFMLLGSL). Residues 25-42 (LPVKVIEADLEKAHRSKK) are Cytoplasmic-facing. A helical membrane pass occupies residues 43-63 (VLSLCNTFGGGVFLATCFNAL). Topologically, residues 64 to 85 (LPAVRDKLQQVLSLGHISTDYP) are extracellular. Residues 86-106 (LAETLMMVGFFLTVFVEQLVL) traverse the membrane as a helical segment. Topologically, residues 107-172 (TFRRERPPFI…RELGRPGPLR (66 aa)) are cytoplasmic. A phosphoserine mark is found at Ser125 and Ser129. A helical membrane pass occupies residues 173-193 (LLSLVFALSAHSVFEGLALGL). Topologically, residues 194 to 199 (QEEGER) are extracellular. Residues 200–220 (VVSLFVGVAIHETLVAVALGI) traverse the membrane as a helical segment. The Cytoplasmic segment spans residues 221 to 232 (SMARSAVPLRDA). A helical membrane pass occupies residues 233 to 253 (AKLAVTVSAMIPVGIGLGLGI). Residues 254 to 265 (ESARSVASSVAS) are Extracellular-facing. The chain crosses the membrane as a helical span at residues 266 to 286 (ALLQGLAGGTFLFVTFLEILA). Residues 287 to 294 (KELEERSE) lie on the Cytoplasmic side of the membrane. A helical membrane pass occupies residues 295-315 (QLLKVLFLVLGYAVLAGMVFL). Topologically, residues 316–317 (KW) are extracellular.

It belongs to the ZIP transporter (TC 2.A.5) family. As to expression, highly expressed in the testes. Highly expressed in dentate gyrus granule cells of the hippocampus. Expressed in the mammary gland.

The protein localises to the cell membrane. It localises to the apical cell membrane. It carries out the reaction Zn(2+)(in) = Zn(2+)(out). Its function is as follows. Transporter for the divalent cation Zn(2+). Mediates the influx of Zn(2+) into cells from extracellular space. Controls Zn(2+) accumulation into dentate gyrus granule cells in the hippocampus. Mediates Zn(2+) reuptake from the secreted milk within the alveolar lumen. The polypeptide is Zinc transporter ZIP3 (Slc39a3) (Mus musculus (Mouse)).